The sequence spans 209 residues: Ribosomal RNA large subunit methyltransferase E (209 aa).

The S-adenosyl-L-methionine site is built by Gly63, Trp65, Asp83, Asp99, and Asp124. Residue Lys164 is the Proton acceptor of the active site.

This sequence belongs to the class I-like SAM-binding methyltransferase superfamily. RNA methyltransferase RlmE family.

Its subcellular location is the cytoplasm. It catalyses the reaction uridine(2552) in 23S rRNA + S-adenosyl-L-methionine = 2'-O-methyluridine(2552) in 23S rRNA + S-adenosyl-L-homocysteine + H(+). Specifically methylates the uridine in position 2552 of 23S rRNA at the 2'-O position of the ribose in the fully assembled 50S ribosomal subunit. The protein is Ribosomal RNA large subunit methyltransferase E of Vibrio parahaemolyticus serotype O3:K6 (strain RIMD 2210633).